Here is a 181-residue protein sequence, read N- to C-terminus: Oligoribonuclease (181 aa).

In terms of domain architecture, Exonuclease spans 8-171 (LVWLDMEMTG…ADIYESIDEL (164 aa)). Y129 is an active-site residue.

It belongs to the oligoribonuclease family.

Its subcellular location is the cytoplasm. 3'-to-5' exoribonuclease specific for small oligoribonucleotides. This Bordetella bronchiseptica (strain ATCC BAA-588 / NCTC 13252 / RB50) (Alcaligenes bronchisepticus) protein is Oligoribonuclease.